We begin with the raw amino-acid sequence, 69 residues long: Putative membrane protein insertion efficiency factor (69 aa).

The protein belongs to the UPF0161 family.

The protein localises to the cell membrane. In terms of biological role, could be involved in insertion of integral membrane proteins into the membrane. The polypeptide is Putative membrane protein insertion efficiency factor (Clostridium botulinum (strain 657 / Type Ba4)).